We begin with the raw amino-acid sequence, 390 residues long: LL-diaminopimelate aminotransferase 2 (390 aa).

Residues tyrosine 13 and glycine 38 each coordinate substrate. Residues tyrosine 67, 102–103 (SK), tyrosine 127, asparagine 177, tyrosine 208, and 236–238 (SLS) each bind pyridoxal 5'-phosphate. Substrate is bound by residues lysine 103, tyrosine 127, and asparagine 177. At lysine 239 the chain carries N6-(pyridoxal phosphate)lysine. Arginine 247 contributes to the pyridoxal 5'-phosphate binding site. Arginine 365 is a binding site for substrate.

Belongs to the class-I pyridoxal-phosphate-dependent aminotransferase family. LL-diaminopimelate aminotransferase subfamily. As to quaternary structure, homodimer. Requires pyridoxal 5'-phosphate as cofactor.

It carries out the reaction (2S,6S)-2,6-diaminopimelate + 2-oxoglutarate = (S)-2,3,4,5-tetrahydrodipicolinate + L-glutamate + H2O + H(+). The protein operates within amino-acid biosynthesis; L-lysine biosynthesis via DAP pathway; LL-2,6-diaminopimelate from (S)-tetrahydrodipicolinate (aminotransferase route): step 1/1. Its function is as follows. Involved in the synthesis of meso-diaminopimelate (m-DAP or DL-DAP), required for both lysine and peptidoglycan biosynthesis. Catalyzes the direct conversion of tetrahydrodipicolinate to LL-diaminopimelate. The protein is LL-diaminopimelate aminotransferase 2 of Nostoc sp. (strain PCC 7120 / SAG 25.82 / UTEX 2576).